Here is a 280-residue protein sequence, read N- to C-terminus: UDP-3-O-acyl-N-acetylglucosamine deacetylase (280 aa).

Residues His79, His237, and Asp241 each coordinate Zn(2+). The Proton donor role is filled by His264.

The protein belongs to the LpxC family. Requires Zn(2+) as cofactor.

The enzyme catalyses a UDP-3-O-[(3R)-3-hydroxyacyl]-N-acetyl-alpha-D-glucosamine + H2O = a UDP-3-O-[(3R)-3-hydroxyacyl]-alpha-D-glucosamine + acetate. It participates in glycolipid biosynthesis; lipid IV(A) biosynthesis; lipid IV(A) from (3R)-3-hydroxytetradecanoyl-[acyl-carrier-protein] and UDP-N-acetyl-alpha-D-glucosamine: step 2/6. Catalyzes the hydrolysis of UDP-3-O-myristoyl-N-acetylglucosamine to form UDP-3-O-myristoylglucosamine and acetate, the committed step in lipid A biosynthesis. This is UDP-3-O-acyl-N-acetylglucosamine deacetylase from Chlamydia abortus (strain DSM 27085 / S26/3) (Chlamydophila abortus).